Here is a 477-residue protein sequence, read N- to C-terminus: Argininosuccinate lyase (477 aa).

Belongs to the lyase 1 family. Argininosuccinate lyase subfamily.

It is found in the cytoplasm. It carries out the reaction 2-(N(omega)-L-arginino)succinate = fumarate + L-arginine. The protein operates within amino-acid biosynthesis; L-arginine biosynthesis; L-arginine from L-ornithine and carbamoyl phosphate: step 3/3. The chain is Argininosuccinate lyase from Corynebacterium efficiens (strain DSM 44549 / YS-314 / AJ 12310 / JCM 11189 / NBRC 100395).